Consider the following 234-residue polypeptide: Orotidine 5'-phosphate decarboxylase (234 aa).

Substrate is bound by residues Asp-11, Lys-33, 60 to 69 (DLKFHDIPNT), Thr-120, Arg-181, Gln-190, Gly-210, and Arg-211. Lys-62 functions as the Proton donor in the catalytic mechanism.

This sequence belongs to the OMP decarboxylase family. Type 1 subfamily. Homodimer.

The enzyme catalyses orotidine 5'-phosphate + H(+) = UMP + CO2. The protein operates within pyrimidine metabolism; UMP biosynthesis via de novo pathway; UMP from orotate: step 2/2. In terms of biological role, catalyzes the decarboxylation of orotidine 5'-monophosphate (OMP) to uridine 5'-monophosphate (UMP). The protein is Orotidine 5'-phosphate decarboxylase of Shewanella sediminis (strain HAW-EB3).